A 598-amino-acid chain; its full sequence is Serine/threonine-protein kinase cot-1 (598 aa).

Composition is skewed to polar residues over residues 1-16 (MDNTNRPHLNLGTNDT), 24-33 (TYPTTPSTFP), and 99-126 (PRTSGNSGQQQTYGNYLSAPMPSNTQTE). Disordered stretches follow at residues 1–46 (MDNT…GGSQ), 80–148 (GSAG…NQKK), and 163–190 (RARERNQRQSEMEQKLGETNDARRRESI). The region spanning 214 to 518 (YQTIKIIGKG…AHEIKSHAFF (305 aa)) is the Protein kinase domain. ATP-binding positions include 220 to 228 (IGKGAFGEV) and K243. D337 serves as the catalytic Proton acceptor. The 80-residue stretch at 519 to 598 (RGVEFDSLRR…TFKRFDNNFR (80 aa)) folds into the AGC-kinase C-terminal domain.

The protein belongs to the protein kinase superfamily. STE Ser/Thr protein kinase family. COT1 subfamily.

It catalyses the reaction L-seryl-[protein] + ATP = O-phospho-L-seryl-[protein] + ADP + H(+). It carries out the reaction L-threonyl-[protein] + ATP = O-phospho-L-threonyl-[protein] + ADP + H(+). Its function is as follows. Protein kinase required for hyphal elongation. In Neurospora crassa (strain ATCC 24698 / 74-OR23-1A / CBS 708.71 / DSM 1257 / FGSC 987), this protein is Serine/threonine-protein kinase cot-1 (cot-1).